A 460-amino-acid chain; its full sequence is Argininosuccinate lyase (460 aa).

It belongs to the lyase 1 family. Argininosuccinate lyase subfamily.

The protein resides in the cytoplasm. The enzyme catalyses 2-(N(omega)-L-arginino)succinate = fumarate + L-arginine. It functions in the pathway amino-acid biosynthesis; L-arginine biosynthesis; L-arginine from L-ornithine and carbamoyl phosphate: step 3/3. This is Argininosuccinate lyase from Campylobacter jejuni (strain RM1221).